Reading from the N-terminus, the 731-residue chain is MIRLAQQTQVLKGKPPNQFVPHPTKNSLTHPMKFNGTIAMEHHEHNYAIPYTPATFNNPALATYQVSPANHFVPHFGGNIGANNNNHLAQNNSNNSNNHHNNNRNHHHNNNRNHHQNNHNHSKYNNSNQGNSISPDSPWFHKVCAFEDCVSQTLYMSQTPRRQNMKHHSEHPNSNANPLFWDSIGRAMGLYHDLLTTPELNSDRVSKLVHLLHNGLRANRNQLTRMNKKPDYDSQSFHKEMTNYLCKSLREISEDVLNGKVELNEYGAMHLITAFKELLLFEEAVDIWKAAINGQNTYTSNIFLNPRVVGVILPILYDNGVSYPEIQALYEKSSSMINYFHPNLSVGMIRASLSASENDMALKLFQKLCQESTEMKYGYLIETHLSFIGECKDLNVAQTFFDKALNDEMPYKIDLQVSYVKSFLRNIWSQTRDFNHIYQIWYKSSLHYGRNVNHGISSSLNDTFFDIFFENYAVDKMQGFQTLQNIIQTYNNIKHIDEPFFNIILAKCTVWHDRSILEYIDKSYEAYHIPKTIVAYRILLKSMGSVDDASNAEILQRWMDLIRKSDEIGQRFIANADWAALRDATVTWTQNDRDSKKSNMNSTQISRTATPSPSLTPMDTPAPEHLFNNPQNPMDFYSHPALQAATASGAFDEFAAEAASSSIPVDGRMVLYLKIVKRYSPYCRDSRQLARLTTGTAVKYSVLQEVLNQFQTLIVNDIPIPELHNLKPTCV.

Polar residues predominate over residues 1–10 (MIRLAQQTQV). 3 disordered regions span residues 1–29 (MIRLAQQTQVLKGKPPNQFVPHPTKNSLT), 77–133 (GGNI…GNSI), and 590–630 (QNDR…FNNP). Positions 83-100 (NNNNHLAQNNSNNSNNHH) are enriched in low complexity. Residues 101–122 (NNNRNHHHNNNRNHHQNNHNHS) are compositionally biased toward basic residues. Ser132 is subject to Phosphoserine. The segment covering 598–617 (SNMNSTQISRTATPSPSLTP) has biased composition (polar residues).

This sequence belongs to the RMD9 family. In terms of assembly, monomer. Post-translationally, phosphorylated. Phosphorylation promotes binding to RNA.

It localises to the mitochondrion inner membrane. May be involved in the processing or stability of mitochondrial mRNAs. In Saccharomyces cerevisiae (strain ATCC 204508 / S288c) (Baker's yeast), this protein is RNA-binding protein RMD9-like, mitochondrial.